Consider the following 233-residue polypeptide: Small ribosomal subunit protein uS2c (233 aa).

The protein belongs to the universal ribosomal protein uS2 family.

It localises to the plastid. It is found in the cyanelle. The protein is Small ribosomal subunit protein uS2c (rps2) of Cyanophora paradoxa.